Here is a 162-residue protein sequence, read N- to C-terminus: uncharacterized protein (162 aa).

A helical membrane pass occupies residues 5 to 25; that stretch reads IIILFLFTAILCSITLCGCIS.

Its subcellular location is the membrane. This is an uncharacterized protein from Methanocaldococcus jannaschii (strain ATCC 43067 / DSM 2661 / JAL-1 / JCM 10045 / NBRC 100440) (Methanococcus jannaschii).